Reading from the N-terminus, the 345-residue chain is Phosphoribosylformylglycinamidine cyclo-ligase (345 aa).

The protein belongs to the AIR synthase family.

The protein resides in the cytoplasm. It carries out the reaction 2-formamido-N(1)-(5-O-phospho-beta-D-ribosyl)acetamidine + ATP = 5-amino-1-(5-phospho-beta-D-ribosyl)imidazole + ADP + phosphate + H(+). It functions in the pathway purine metabolism; IMP biosynthesis via de novo pathway; 5-amino-1-(5-phospho-D-ribosyl)imidazole from N(2)-formyl-N(1)-(5-phospho-D-ribosyl)glycinamide: step 2/2. This Shewanella sp. (strain MR-7) protein is Phosphoribosylformylglycinamidine cyclo-ligase.